The primary structure comprises 369 residues: Developmentally-regulated G-protein 3 (369 aa).

Residues 66 to 291 form the OBG-type G domain; the sequence is SRVGLVGFPS…LLDKIWEYLD (226 aa). Residues 72–79, 118–122, and 249–252 contribute to the GTP site; these read GFPSVGKS, DLPGI, and NKID. The TGS domain maps to 291-367; that stretch reads DLTRIYTKPK…EDEDVVQIVK (77 aa).

This sequence belongs to the TRAFAC class OBG-HflX-like GTPase superfamily. OBG GTPase family.

Functionally, binds GDP and GTP, and has low GTPase activity in vitro. The protein is Developmentally-regulated G-protein 3 (DRG3) of Arabidopsis thaliana (Mouse-ear cress).